Here is a 1822-residue protein sequence, read N- to C-terminus: Signal-induced proliferation-associated 1-like protein 1 (1822 aa).

Disordered regions lie at residues 1-30 (MTSL…PKVH) and 47-125 (GSSV…VSLN). Residues 84 to 94 (PPRKENVKESS) are compositionally biased toward basic and acidic residues. Low complexity predominate over residues 95–125 (RSSQEIETSSCLESLSSKGSPVSQGSSVSLN). A phosphoserine mark is found at serine 162, serine 187, serine 193, serine 208, serine 255, and serine 288. Positions 277-297 (EREKPLKRRSKSETGDSSIFR) are disordered. Positions 638–855 (FMKLDEQGLN…RTRQEYLKDL (218 aa)) constitute a Rap-GAP domain. The 77-residue stretch at 992–1068 (EMTLRRNGLG…VKVVIIPPHD (77 aa)) folds into the PDZ domain. Phosphoserine is present on residues serine 1117, serine 1126, serine 1155, serine 1166, serine 1188, serine 1209, and serine 1220. A disordered region spans residues 1134 to 1165 (AGKGDGKMPLPERAANIPRSISSDGRPLERRL). The disordered stretch occupies residues 1183–1252 (SQCRNSPSNL…WQRSEDSLAD (70 aa)). The segment covering 1188–1198 (SPSNLSSSSET) has biased composition (low complexity). Over residues 1225–1244 (DRQNTQSDIGGSGKSTPSWQ) the composition is skewed to polar residues. Phosphoserine is present on residues serine 1273 and serine 1288. The interval 1286-1324 (HLSPNKQGHSDSHYSSHSSSNTLSSNASSAHSDEKWYDG) is disordered. The span at 1300-1315 (SSHSSSNTLSSNASSA) shows a compositional bias: low complexity. Serine 1344 is subject to Phosphoserine; by PLK2. Residue threonine 1348 is modified to Phosphothreonine; by PLK2. Residues 1358–1367 (TASLGASTSS) show a composition bias toward low complexity. Residues 1358-1382 (TASLGASTSSPRSGPGKEKVAPLWH) form a disordered region. Serine 1367 carries the post-translational modification Phosphoserine; by CDK5. Serine 1384 is subject to Phosphoserine. A compositionally biased stretch (basic and acidic residues) spans 1395–1407 (LETEGHGMDRKTE). A disordered region spans residues 1395–1493 (LETEGHGMDR…SSSGPRTFYP (99 aa)). Serine 1408, serine 1409, serine 1430, serine 1449, and serine 1451 each carry phosphoserine. Over residues 1417 to 1436 (KSQGGSSPLTRENSTFSIND) the composition is skewed to polar residues. 2 stretches are compositionally biased toward low complexity: residues 1437 to 1451 (ATSH…HSAS) and 1471 to 1486 (SSQL…SSSS). Serine 1546 and serine 1567 each carry phosphoserine. The disordered stretch occupies residues 1567–1595 (SPTPESQKNFKFHGLSSPQSPFPSTPTSR). Threonine 1569 bears the Phosphothreonine mark. Serine 1572, serine 1583, serine 1586, serine 1603, and serine 1606 each carry phosphoserine. The residue at position 1619 (arginine 1619) is an Asymmetric dimethylarginine. Residues serine 1621, serine 1665, serine 1668, serine 1726, serine 1729, serine 1746, serine 1747, and serine 1752 each carry the phosphoserine modification. Residues 1753–1813 (PTLASKVDQL…ASDKLKKFTE (61 aa)) adopt a coiled-coil conformation.

In terms of assembly, interacts (via PDZ domain) with EPHA4 (via PDZ motif); controls neuronal morphology through regulation of the RAP1 (RAP1A or RAP1B) and RAP2 (RAP2A, RAP2B or RAP2C) GTPases. Interacts with DLG4, PDLIM5, PDLIM7 and LZTS3. Interacts with the actin cytoskeleton. Post-translationally, ubiquitinated and degraded by the SCF(BTRC) following phosphorylation by PLK2. In terms of processing, phosphorylated at Ser-1367 by CDK5, creating a docking site for the POLO box domains of PLK2. Subsequently, PLK2 binds and phosphorylates SIPA1L1, leading to ubiquitination and degradation by the proteasome. Detected in brain (at protein level).

It localises to the cytoplasm. The protein resides in the cytoskeleton. It is found in the postsynaptic density. Its subcellular location is the synapse. The protein localises to the synaptosome. Functionally, stimulates the GTPase activity of RAP2A. Promotes reorganization of the actin cytoskeleton and recruits DLG4 to F-actin. Contributes to the regulation of dendritic spine morphogenesis. The sequence is that of Signal-induced proliferation-associated 1-like protein 1 (Sipa1l1) from Rattus norvegicus (Rat).